The sequence spans 547 residues: MEVGGDTAAPAPGGAEDLEDTQFPSEEAREGGGVHAVPPDPEDEGLEETGSKDKDQPPSPSPPPQSEALSSTSRLWSPAAPENSPTCSPESSSGGQGGDPSDEEWRSQRKHVFVLSEAGKPIYSRYGSVEALSATMGVMTALVSFVQSAGDAIRAIYAEDHKLVFLQQGPLLLVAMSRTSQSAAQLRGELLAVHAQIVSTLTRASVARIFAHKQNYDLRRLLAGSERTLDRLLDSMEQDPGALLLGAVRCVPLARPLRDALGALLRRCTAPGLALSVLAVGGRLITAAQERNVLAECRLDPADLQLLLDWVGAPAFAAGEAWAPVCLPRFNPDGFFYAYVARLDAMPVCLLLLGTQREAFHAMAACRRLVEDGMHALGAMRALGEAASFSNASSASAPAYSVQAVGAPGLRHFLYKPLDIPDHHRQLPQFTSPELEAPYSREEERQRLSDLYHRLHARLHSTSRPLRLIYHVAEKETLLAWVTSKFELYTCLSPLVTKAGAILVVTKLLRWVKKEEDRLFIRYPPKYSTPPATSTDQAAHNGLFTGL.

The residue at position 1 (Met-1) is an N-acetylmethionine. A compositionally biased stretch (low complexity) spans 1–15; it reads MEVGGDTAAPAPGGA. Residues 1–106 form a disordered region; that stretch reads MEVGGDTAAP…GGDPSDEEWR (106 aa). A phosphoserine mark is found at Ser-59 and Ser-61.

Belongs to the MON1/SAND family. In terms of assembly, interacts with CCNT2; down-regulates CCNT2-mediated activation of viral promoters during herpes simplex virus 1/HHV-1 infection. Found in a complex with RMC1, CCZ1 MON1A and MON1B.

This is Vacuolar fusion protein MON1 homolog B (MON1B) from Homo sapiens (Human).